Here is a 203-residue protein sequence, read N- to C-terminus: Outer-membrane lipoprotein carrier protein (203 aa).

Positions 1 to 19 are cleaved as a signal peptide; that stretch reads MKKSIVVLFSAVLPFAVFA.

Belongs to the LolA family. As to quaternary structure, monomer.

Its subcellular location is the periplasm. Participates in the translocation of lipoproteins from the inner membrane to the outer membrane. Only forms a complex with a lipoprotein if the residue after the N-terminal Cys is not an aspartate (The Asp acts as a targeting signal to indicate that the lipoprotein should stay in the inner membrane). The chain is Outer-membrane lipoprotein carrier protein from Shewanella amazonensis (strain ATCC BAA-1098 / SB2B).